A 141-amino-acid chain; its full sequence is Large ribosomal subunit protein uL11 (141 aa).

It belongs to the universal ribosomal protein uL11 family. As to quaternary structure, part of the ribosomal stalk of the 50S ribosomal subunit. Interacts with L10 and the large rRNA to form the base of the stalk. L10 forms an elongated spine to which L12 dimers bind in a sequential fashion forming a multimeric L10(L12)X complex. One or more lysine residues are methylated.

In terms of biological role, forms part of the ribosomal stalk which helps the ribosome interact with GTP-bound translation factors. The chain is Large ribosomal subunit protein uL11 from Prochlorococcus marinus (strain MIT 9515).